The sequence spans 101 residues: Small ribosomal subunit protein uS14 (101 aa).

Belongs to the universal ribosomal protein uS14 family. As to quaternary structure, part of the 30S ribosomal subunit. Contacts proteins S3 and S10.

Functionally, binds 16S rRNA, required for the assembly of 30S particles and may also be responsible for determining the conformation of the 16S rRNA at the A site. This Pseudoalteromonas atlantica (strain T6c / ATCC BAA-1087) protein is Small ribosomal subunit protein uS14.